The chain runs to 119 residues: Large ribosomal subunit protein bL20 (119 aa).

It belongs to the bacterial ribosomal protein bL20 family.

Its function is as follows. Binds directly to 23S ribosomal RNA and is necessary for the in vitro assembly process of the 50S ribosomal subunit. It is not involved in the protein synthesizing functions of that subunit. This chain is Large ribosomal subunit protein bL20, found in Latilactobacillus sakei subsp. sakei (strain 23K) (Lactobacillus sakei subsp. sakei).